The chain runs to 291 residues: tRNA dimethylallyltransferase (291 aa).

8–15 lines the ATP pocket; the sequence is GSTASGKT. Position 10–15 (10–15) interacts with substrate; it reads TASGKT. The interval 33–36 is interaction with substrate tRNA; that stretch reads DSLC.

The protein belongs to the IPP transferase family. In terms of assembly, monomer. Requires Mg(2+) as cofactor.

It catalyses the reaction adenosine(37) in tRNA + dimethylallyl diphosphate = N(6)-dimethylallyladenosine(37) in tRNA + diphosphate. Functionally, catalyzes the transfer of a dimethylallyl group onto the adenine at position 37 in tRNAs that read codons beginning with uridine, leading to the formation of N6-(dimethylallyl)adenosine (i(6)A). This chain is tRNA dimethylallyltransferase, found in Aliarcobacter butzleri (strain RM4018) (Arcobacter butzleri).